The following is a 402-amino-acid chain: Dual-specificity RNA methyltransferase RlmN (402 aa).

The Proton acceptor role is filled by E124. Residues 130–370 (DADRGTLCVS…APVRTPRGRD (241 aa)) form the Radical SAM core domain. An intrachain disulfide couples C137 to C375. 3 residues coordinate [4Fe-4S] cluster: C144, C148, and C151. S-adenosyl-L-methionine is bound by residues 199–200 (GE), S231, 253–255 (SLH), and N332. The active-site S-methylcysteine intermediate is C375.

Belongs to the radical SAM superfamily. RlmN family. The cofactor is [4Fe-4S] cluster.

It localises to the cytoplasm. It catalyses the reaction adenosine(2503) in 23S rRNA + 2 reduced [2Fe-2S]-[ferredoxin] + 2 S-adenosyl-L-methionine = 2-methyladenosine(2503) in 23S rRNA + 5'-deoxyadenosine + L-methionine + 2 oxidized [2Fe-2S]-[ferredoxin] + S-adenosyl-L-homocysteine. The enzyme catalyses adenosine(37) in tRNA + 2 reduced [2Fe-2S]-[ferredoxin] + 2 S-adenosyl-L-methionine = 2-methyladenosine(37) in tRNA + 5'-deoxyadenosine + L-methionine + 2 oxidized [2Fe-2S]-[ferredoxin] + S-adenosyl-L-homocysteine. Specifically methylates position 2 of adenine 2503 in 23S rRNA and position 2 of adenine 37 in tRNAs. m2A2503 modification seems to play a crucial role in the proofreading step occurring at the peptidyl transferase center and thus would serve to optimize ribosomal fidelity. The polypeptide is Dual-specificity RNA methyltransferase RlmN (Rhizorhabdus wittichii (strain DSM 6014 / CCUG 31198 / JCM 15750 / NBRC 105917 / EY 4224 / RW1) (Sphingomonas wittichii)).